The primary structure comprises 274 residues: Large ribosomal subunit protein uL2 (274 aa).

Residues 223-274 form a disordered region; sequence VAMNPVDHPHGGGEGRTSGGRHPVSPWGMPTKGFKTRKNKSTDKYIVRRRNK.

Belongs to the universal ribosomal protein uL2 family. As to quaternary structure, part of the 50S ribosomal subunit. Forms a bridge to the 30S subunit in the 70S ribosome.

Functionally, one of the primary rRNA binding proteins. Required for association of the 30S and 50S subunits to form the 70S ribosome, for tRNA binding and peptide bond formation. It has been suggested to have peptidyltransferase activity; this is somewhat controversial. Makes several contacts with the 16S rRNA in the 70S ribosome. This chain is Large ribosomal subunit protein uL2, found in Aliivibrio salmonicida (strain LFI1238) (Vibrio salmonicida (strain LFI1238)).